Here is a 220-residue protein sequence, read N- to C-terminus: Phosphatidylserine decarboxylase proenzyme (220 aa).

Serine 188 serves as the catalytic Schiff-base intermediate with substrate; via pyruvic acid. Residue serine 188 is modified to Pyruvic acid (Ser); by autocatalysis.

It belongs to the phosphatidylserine decarboxylase family. PSD-A subfamily. As to quaternary structure, heterodimer of a large membrane-associated beta subunit and a small pyruvoyl-containing alpha subunit. Pyruvate serves as cofactor. Is synthesized initially as an inactive proenzyme. Formation of the active enzyme involves a self-maturation process in which the active site pyruvoyl group is generated from an internal serine residue via an autocatalytic post-translational modification. Two non-identical subunits are generated from the proenzyme in this reaction, and the pyruvate is formed at the N-terminus of the alpha chain, which is derived from the carboxyl end of the proenzyme. The post-translation cleavage follows an unusual pathway, termed non-hydrolytic serinolysis, in which the side chain hydroxyl group of the serine supplies its oxygen atom to form the C-terminus of the beta chain, while the remainder of the serine residue undergoes an oxidative deamination to produce ammonia and the pyruvoyl prosthetic group on the alpha chain.

It localises to the cell membrane. It carries out the reaction a 1,2-diacyl-sn-glycero-3-phospho-L-serine + H(+) = a 1,2-diacyl-sn-glycero-3-phosphoethanolamine + CO2. It functions in the pathway phospholipid metabolism; phosphatidylethanolamine biosynthesis; phosphatidylethanolamine from CDP-diacylglycerol: step 2/2. In terms of biological role, catalyzes the formation of phosphatidylethanolamine (PtdEtn) from phosphatidylserine (PtdSer). The sequence is that of Phosphatidylserine decarboxylase proenzyme from Cytophaga hutchinsonii (strain ATCC 33406 / DSM 1761 / CIP 103989 / NBRC 15051 / NCIMB 9469 / D465).